Reading from the N-terminus, the 238-residue chain is ATP-dependent dethiobiotin synthetase BioD (238 aa).

Glutamate 12–valine 17 contacts ATP. Residue threonine 16 participates in Mg(2+) binding. Residue lysine 37 is part of the active site. Residue threonine 41 participates in substrate binding. ATP is bound by residues aspartate 50, glutamate 109–glycine 112, glycine 170–serine 171, and proline 200–glycine 202. Mg(2+) contacts are provided by aspartate 50 and glutamate 109.

This sequence belongs to the dethiobiotin synthetase family. In terms of assembly, homodimer. It depends on Mg(2+) as a cofactor.

It localises to the cytoplasm. The enzyme catalyses (7R,8S)-7,8-diammoniononanoate + CO2 + ATP = (4R,5S)-dethiobiotin + ADP + phosphate + 3 H(+). It functions in the pathway cofactor biosynthesis; biotin biosynthesis; biotin from 7,8-diaminononanoate: step 1/2. Its function is as follows. Catalyzes a mechanistically unusual reaction, the ATP-dependent insertion of CO2 between the N7 and N8 nitrogen atoms of 7,8-diaminopelargonic acid (DAPA, also called 7,8-diammoniononanoate) to form a ureido ring. This is ATP-dependent dethiobiotin synthetase BioD from Streptomyces avermitilis (strain ATCC 31267 / DSM 46492 / JCM 5070 / NBRC 14893 / NCIMB 12804 / NRRL 8165 / MA-4680).